The following is a 513-amino-acid chain: Na(+)/H(+) antiporter NhaB (513 aa).

Transmembrane regions (helical) follow at residues 23–43, 52–72, 97–117, 120–140, 144–164, 202–222, 238–258, 303–323, 348–368, 391–411, 447–467, and 475–495; these read LALI…PFVA, IFTL…LLAI, LLLM…LFIF, LLLS…AAAF, FLDA…FYGI, LMMH…VGEP, FFLR…LTCL, AIIG…VGLI, TESL…AVII, LFYI…VGTI, ATPN…APLI, and VWMA…CVEF.

Belongs to the NhaB Na(+)/H(+) (TC 2.A.34) antiporter family.

It localises to the cell inner membrane. It catalyses the reaction 2 Na(+)(in) + 3 H(+)(out) = 2 Na(+)(out) + 3 H(+)(in). Na(+)/H(+) antiporter that extrudes sodium in exchange for external protons. In Escherichia coli (strain 55989 / EAEC), this protein is Na(+)/H(+) antiporter NhaB.